A 327-amino-acid chain; its full sequence is Cysteine synthase (327 aa).

The residue at position 65 (K65) is an N6-(pyridoxal phosphate)lysine. Pyridoxal 5'-phosphate-binding positions include N95, 200-204, and S282; that span reads GTGGT.

This sequence belongs to the cysteine synthase/cystathionine beta-synthase family. It depends on pyridoxal 5'-phosphate as a cofactor.

The catalysed reaction is O-acetyl-L-serine + hydrogen sulfide = L-cysteine + acetate. The protein operates within amino-acid biosynthesis; L-cysteine biosynthesis; L-cysteine from L-serine: step 2/2. The chain is Cysteine synthase (cysM) from Aquifex aeolicus (strain VF5).